The primary structure comprises 242 residues: MMMDLFETGSYFFYLDGENVTLQPLEVAEGSPLYPGSDGTLSPCQDQMPPEAGSDSSGEEHVLAPPGLQPPHCPGQCLIWACKTCKRKSAPTDRRKAATLRERRRLKKINEAFEALKRRTVANPNQRLPKVEILRSAISYIERLQDLLHRLDQQEKMQELGVDPFSYRPKQENLEGADFLRTCSSQWPSVSDHSRGLVITAKEGGASIDSSASSSLRCLSSIVDSISSEERKLPCVEEVVEK.

The interval 31 to 63 (SPLYPGSDGTLSPCQDQMPPEAGSDSSGEEHVL) is disordered. In terms of domain architecture, bHLH spans 93 to 144 (DRRKAATLRERRRLKKINEAFEALKRRTVANPNQRLPKVEILRSAISYIERL).

In terms of assembly, efficient DNA binding requires dimerization with another bHLH protein. Interacts with CSRP3. Skeletal muscle.

It localises to the nucleus. Its function is as follows. Involved in muscle differentiation (myogenic factor). Induces fibroblasts to differentiate into myoblasts. Probable sequence specific DNA-binding protein. In Homo sapiens (Human), this protein is Myogenic factor 6 (MYF6).